A 200-amino-acid chain; its full sequence is Imidazoleglycerol-phosphate dehydratase (200 aa).

The protein belongs to the imidazoleglycerol-phosphate dehydratase family.

The protein resides in the cytoplasm. The enzyme catalyses D-erythro-1-(imidazol-4-yl)glycerol 3-phosphate = 3-(imidazol-4-yl)-2-oxopropyl phosphate + H2O. The protein operates within amino-acid biosynthesis; L-histidine biosynthesis; L-histidine from 5-phospho-alpha-D-ribose 1-diphosphate: step 6/9. This chain is Imidazoleglycerol-phosphate dehydratase, found in Chlorobium phaeobacteroides (strain DSM 266 / SMG 266 / 2430).